The sequence spans 151 residues: Large ribosomal subunit protein uL13 (151 aa).

It belongs to the universal ribosomal protein uL13 family. In terms of assembly, part of the 50S ribosomal subunit.

Functionally, this protein is one of the early assembly proteins of the 50S ribosomal subunit, although it is not seen to bind rRNA by itself. It is important during the early stages of 50S assembly. This chain is Large ribosomal subunit protein uL13, found in Nostoc sp. (strain PCC 7120 / SAG 25.82 / UTEX 2576).